Consider the following 197-residue polypeptide: uncharacterized protein (197 aa).

The next 6 helical transmembrane spans lie at 5–23 (LNLL…GLRF), 27–46 (ISFA…MLRF), 55–77 (VIAG…LAYT), 87–109 (LSLL…VIRI), 116–138 (VFAF…LPTG), and 153–174 (FVEF…CLVF).

It localises to the cell membrane. This is an uncharacterized protein from Archaeoglobus fulgidus (strain ATCC 49558 / DSM 4304 / JCM 9628 / NBRC 100126 / VC-16).